The sequence spans 100 residues: Small ribosomal subunit protein uS14c (100 aa).

It belongs to the universal ribosomal protein uS14 family. In terms of assembly, part of the 30S ribosomal subunit.

The protein localises to the plastid. The protein resides in the chloroplast. Its function is as follows. Binds 16S rRNA, required for the assembly of 30S particles. This chain is Small ribosomal subunit protein uS14c, found in Trieres chinensis (Marine centric diatom).